The following is an 894-amino-acid chain: Eukaryotic translation initiation factor 3 subunit C (894 aa).

2 disordered regions span residues methionine 1–lysine 28 and serine 162–methionine 235. Composition is skewed to acidic residues over residues serine 12 to glutamate 22, aspartate 169 to proline 189, and serine 203 to serine 214. Residues phenylalanine 215–asparagine 224 are compositionally biased toward polar residues. A PCI domain is found at tyrosine 625 to proline 801. Positions glutamine 824–phenylalanine 894 are disordered. Residues arginine 845–lysine 854 show a composition bias toward basic and acidic residues. The span at glycine 855 to proline 870 shows a compositional bias: gly residues. Positions glutamine 884–phenylalanine 894 are enriched in basic residues.

It belongs to the eIF-3 subunit C family. Component of the eukaryotic translation initiation factor 3 (eIF-3) complex.

It localises to the cytoplasm. Component of the eukaryotic translation initiation factor 3 (eIF-3) complex, which is involved in protein synthesis of a specialized repertoire of mRNAs and, together with other initiation factors, stimulates binding of mRNA and methionyl-tRNAi to the 40S ribosome. The eIF-3 complex specifically targets and initiates translation of a subset of mRNAs involved in cell proliferation. In Caenorhabditis briggsae, this protein is Eukaryotic translation initiation factor 3 subunit C.